Reading from the N-terminus, the 187-residue chain is UPF0301 protein YqgE (187 aa).

It belongs to the UPF0301 (AlgH) family.

This is UPF0301 protein YqgE from Salmonella paratyphi B (strain ATCC BAA-1250 / SPB7).